A 119-amino-acid polypeptide reads, in one-letter code: Chorion class B protein M2807 (119 aa).

The left arm stretch occupies residues 1–11 (GGLGGGCGRGF). A central domain region spans residues 12–80 (SGGGLPVATA…GNGAVGITRE (69 aa)). A right arm (Gly-rich tandem repeats) region spans residues 81–119 (GGLGYGAGYGDGYGLGYGGYGGGYGLGYGGYGGCGCGCG).

It belongs to the chorion protein family.

In terms of biological role, this protein is one of many from the eggshell of the silk moth. This Bombyx mori (Silk moth) protein is Chorion class B protein M2807.